The primary structure comprises 84 residues: Mu-conotoxin-like Cal 12.2a (84 aa).

An N-terminal signal peptide occupies residues 1–19 (MKLTCVLVVLLLVLPFGDL). Positions 20–42 (ITTSNTEDNKRGATPWQNSLKAR) are excised as a propeptide. Intrachain disulfides connect C45-C57, C52-C65, C59-C70, and C64-C76. The residue at position 48 (P48) is a 4-hydroxyproline. W72 bears the 6'-bromotryptophan mark. P77 is subject to 4-hydroxyproline. At W81 the chain carries 6'-bromotryptophan.

This sequence belongs to the conotoxin O1 superfamily. In terms of tissue distribution, expressed by the venom duct.

Its subcellular location is the secreted. Functionally, mu-conotoxins block voltage-gated sodium channels. This toxin reversibly blocks voltage-gated sodium channel in cephalopods, with no alteration in the voltage dependence of sodium conductance or on the kinetics of inactivation. In Californiconus californicus (California cone), this protein is Mu-conotoxin-like Cal 12.2a.